The chain runs to 318 residues: WRKY transcription factor 28 (318 aa).

Polar residues-rich tracts occupy residues 74–84 (SSEVFNSSIDQ) and 106–115 (RVSPSNSSSS). The interval 74–158 (SSEVFNSSID…KTEVKKQREP (85 aa)) is disordered. 2 stretches are compositionally biased toward basic and acidic residues: residues 116–126 (EADHPGEDSGK) and 148–158 (KKTEVKKQREP). The WRKY DNA-binding region spans 166 to 231 (SEVDHLEDGY…YEGQHNHPIP (66 aa)).

It belongs to the WRKY group II-c family.

It is found in the nucleus. Functionally, transcription factor. Interacts specifically with the W box (5'-(T)TGAC[CT]-3'), a frequently occurring elicitor-responsive cis-acting element. The sequence is that of WRKY transcription factor 28 (WRKY28) from Arabidopsis thaliana (Mouse-ear cress).